A 197-amino-acid polypeptide reads, in one-letter code: Ion-translocating oxidoreductase complex subunit B (197 aa).

The tract at residues 1-26 (MSTILIAIIALAVLAAVFGAILGFAS) is hydrophobic. A 4Fe-4S domain is found at 32–90 (EADPIVDQIDTILPQTQCGQCGYPGCRPYAEAIANGDKINKCPPGGQATIEKLADLMGV). 12 residues coordinate [4Fe-4S] cluster: Cys-49, Cys-52, Cys-57, Cys-73, Cys-114, Cys-117, Cys-120, Cys-124, Cys-144, Cys-147, Cys-150, and Cys-154. 4Fe-4S ferredoxin-type domains are found at residues 105 to 134 (TVAF…GGTK) and 135 to 164 (ALHT…MIPV).

Belongs to the 4Fe4S bacterial-type ferredoxin family. RnfB subfamily. As to quaternary structure, the complex is composed of six subunits: RnfA, RnfB, RnfC, RnfD, RnfE and RnfG. [4Fe-4S] cluster is required as a cofactor.

The protein localises to the cell inner membrane. Part of a membrane-bound complex that couples electron transfer with translocation of ions across the membrane. In Vibrio atlanticus (strain LGP32) (Vibrio splendidus (strain Mel32)), this protein is Ion-translocating oxidoreductase complex subunit B.